Here is a 152-residue protein sequence, read N- to C-terminus: Avidin (152 aa).

Positions 1 to 24 (MVHATSPLLLLLLLSLALVAPGLS) are cleaved as a signal peptide. Residues 26 to 149 (RKCSLTGKWT…GINIFTRLRT (124 aa)) form the Avidin-like domain. A disulfide bond links C28 and C107. The N-linked (GlcNAc...) asparagine glycan is linked to N41. Y57 serves as a coordination point for biotin.

It belongs to the avidin/streptavidin family. In terms of assembly, homotetramer. In terms of processing, N-linked glycan at Asn-41 consists of GlcNAc(beta1-2)Man(alpha1-3)[GlcNAc(beta1-4)][Man(alpha1-?)Man(alpha1-6)] Man(beta1-4)GlcNAc(beta1-4)GlcNAc. Synthesized in hen oviduct and concentrated in egg white (where it represents 0.05% of the total protein).

Its subcellular location is the secreted. The biological function of avidin is not known. Forms a strong non-covalent specific complex with biotin (one molecule of biotin per subunit of avidin). The chain is Avidin (AVD) from Gallus gallus (Chicken).